The chain runs to 193 residues: Holliday junction branch migration complex subunit RuvA (193 aa).

The interval 1 to 64 (MIGRIAGTLI…EDAHLLYGFG (64 aa)) is domain I. Residues 65–143 (TAAERETFRQ…ADLGTVPGGP (79 aa)) are domain II. The interval 144-151 (AVSDDAVD) is flexible linker. A domain III region spans residues 151 to 193 (DVLNALLALGYSDKEAALAIKQVPAGTGVSEGIKLALKALSKG).

The protein belongs to the RuvA family. Homotetramer. Forms an RuvA(8)-RuvB(12)-Holliday junction (HJ) complex. HJ DNA is sandwiched between 2 RuvA tetramers; dsDNA enters through RuvA and exits via RuvB. An RuvB hexamer assembles on each DNA strand where it exits the tetramer. Each RuvB hexamer is contacted by two RuvA subunits (via domain III) on 2 adjacent RuvB subunits; this complex drives branch migration. In the full resolvosome a probable DNA-RuvA(4)-RuvB(12)-RuvC(2) complex forms which resolves the HJ.

The protein localises to the cytoplasm. Its function is as follows. The RuvA-RuvB-RuvC complex processes Holliday junction (HJ) DNA during genetic recombination and DNA repair, while the RuvA-RuvB complex plays an important role in the rescue of blocked DNA replication forks via replication fork reversal (RFR). RuvA specifically binds to HJ cruciform DNA, conferring on it an open structure. The RuvB hexamer acts as an ATP-dependent pump, pulling dsDNA into and through the RuvAB complex. HJ branch migration allows RuvC to scan DNA until it finds its consensus sequence, where it cleaves and resolves the cruciform DNA. In Ralstonia pickettii (strain 12J), this protein is Holliday junction branch migration complex subunit RuvA.